A 156-amino-acid polypeptide reads, in one-letter code: Small ribosomal subunit protein uS7 (156 aa).

Belongs to the universal ribosomal protein uS7 family. As to quaternary structure, part of the 30S ribosomal subunit. Contacts proteins S9 and S11.

Functionally, one of the primary rRNA binding proteins, it binds directly to 16S rRNA where it nucleates assembly of the head domain of the 30S subunit. Is located at the subunit interface close to the decoding center, probably blocks exit of the E-site tRNA. In Aeromonas hydrophila subsp. hydrophila (strain ATCC 7966 / DSM 30187 / BCRC 13018 / CCUG 14551 / JCM 1027 / KCTC 2358 / NCIMB 9240 / NCTC 8049), this protein is Small ribosomal subunit protein uS7.